A 666-amino-acid chain; its full sequence is Transketolase (666 aa).

Position 26 (H26) interacts with substrate. Thiamine diphosphate contacts are provided by residues H66 and 114–116 (GPL). D155 provides a ligand contact to Mg(2+). Thiamine diphosphate is bound by residues G156 and N185. Positions 185 and 187 each coordinate Mg(2+). Substrate contacts are provided by H261, R358, and S385. H261 is a thiamine diphosphate binding site. E411 serves as the catalytic Proton donor. F437 provides a ligand contact to thiamine diphosphate. H461, D469, and R520 together coordinate substrate.

Belongs to the transketolase family. In terms of assembly, homodimer. Mg(2+) is required as a cofactor. Ca(2+) serves as cofactor. It depends on Mn(2+) as a cofactor. Requires Co(2+) as cofactor. The cofactor is thiamine diphosphate.

The enzyme catalyses D-sedoheptulose 7-phosphate + D-glyceraldehyde 3-phosphate = aldehydo-D-ribose 5-phosphate + D-xylulose 5-phosphate. Catalyzes the transfer of a two-carbon ketol group from a ketose donor to an aldose acceptor, via a covalent intermediate with the cofactor thiamine pyrophosphate. This chain is Transketolase (tkt), found in Buchnera aphidicola subsp. Baizongia pistaciae (strain Bp).